The chain runs to 577 residues: Arginine--tRNA ligase (577 aa).

The 'HIGH' region motif lies at 122-132; the sequence is PNVAKEMHVGH.

Belongs to the class-I aminoacyl-tRNA synthetase family. In terms of assembly, monomer.

It is found in the cytoplasm. The catalysed reaction is tRNA(Arg) + L-arginine + ATP = L-arginyl-tRNA(Arg) + AMP + diphosphate. In Aliivibrio fischeri (strain ATCC 700601 / ES114) (Vibrio fischeri), this protein is Arginine--tRNA ligase.